Consider the following 248-residue polypeptide: Transcription factor MYBC1 (248 aa).

Positions 102–161 form a DNA-binding region, myb-like GARP; that stretch reads TLKRPRLVWTPQLHKRFVDAVGHLGIKNAVPKTIMQLMSVEGLTRENVASHLQKYRLYLR.

In terms of tissue distribution, expressed in roots, leaves, stems, petioles, filaments, stigma, pedicels, sepals, anthers, petals, and siliques.

Its subcellular location is the nucleus. Functionally, probable transcription factor that acts as a negative regulator of freezing tolerance via a CBF-independent pathway. This chain is Transcription factor MYBC1, found in Arabidopsis thaliana (Mouse-ear cress).